Reading from the N-terminus, the 367-residue chain is uncharacterized protein (367 aa).

It to M.tuberculosis Rv0502.

This is an uncharacterized protein from Mycobacterium leprae (strain TN).